A 605-amino-acid chain; its full sequence is Capsid scaffolding protein (605 aa).

Active-site charge relay system residues include His-52, Ser-120, and His-139. An interaction with pAP region spans residues 326–344 (GEFVLIPTAYYSQLLTGQT). Residues 585–605 (IQGSTADDADMFANQMMVGRC) form an interaction with major capsid protein region.

It belongs to the herpesviridae capsid scaffolding protein family. Homomultimer. Interacts with major capsid protein. In terms of assembly, exists in a monomer-dimer equilibrium with the dimer being the active species. Capsid scaffolding protein is cleaved by assemblin after formation of the spherical procapsid. As a result, the capsid obtains its mature, icosahedral shape. Cleavages occur at two or more sites: release (R-site) and maturation (M-site).

The protein localises to the host cytoplasm. It is found in the host nucleus. The enzyme catalyses Cleaves -Ala-|-Ser- and -Ala-|-Ala- bonds in the scaffold protein.. Functionally, acts as a scaffold protein by binding major capsid protein in the cytoplasm, inducing the nuclear localization of both proteins. Multimerizes in the nucleus such as major capsid protein forms the icosahedral T=16 capsid. Autocatalytic cleavage releases the assembly protein, and subsequently abolishes interaction with major capsid protein. Cleavages products are evicted from the capsid before or during DNA packaging. Its function is as follows. Protease that plays an essential role in virion assembly within the nucleus. Catalyzes the cleavage of the assembly protein after formation of the spherical procapsid. By that cleavage, the capsid matures and gains its icosahedral shape. The cleavage sites seem to include -Ala-Ser-, -Ala-Ala-, as well as Ala-Thr bonds. Assemblin and cleavages products are evicted from the capsid before or during DNA packaging. Plays a major role in capsid assembly. Acts as a scaffold protein by binding major capsid protein. Multimerizes in the nucleus such as major capsid protein forms the icosahedral T=16 capsid. Cleaved by assemblin after capsid completion. The cleavages products are evicted from the capsid before or during DNA packaging. The sequence is that of Capsid scaffolding protein (33) from Varicella-zoster virus (strain Dumas) (HHV-3).